A 384-amino-acid chain; its full sequence is Anhydro-N-acetylmuramic acid kinase (384 aa).

9–16 (GTSVDGID) is a binding site for ATP.

Belongs to the anhydro-N-acetylmuramic acid kinase family.

It carries out the reaction 1,6-anhydro-N-acetyl-beta-muramate + ATP + H2O = N-acetyl-D-muramate 6-phosphate + ADP + H(+). The protein operates within amino-sugar metabolism; 1,6-anhydro-N-acetylmuramate degradation. Its pathway is cell wall biogenesis; peptidoglycan recycling. Functionally, catalyzes the specific phosphorylation of 1,6-anhydro-N-acetylmuramic acid (anhMurNAc) with the simultaneous cleavage of the 1,6-anhydro ring, generating MurNAc-6-P. Is required for the utilization of anhMurNAc either imported from the medium or derived from its own cell wall murein, and thus plays a role in cell wall recycling. The polypeptide is Anhydro-N-acetylmuramic acid kinase (Rippkaea orientalis (strain PCC 8801 / RF-1) (Cyanothece sp. (strain PCC 8801))).